We begin with the raw amino-acid sequence, 156 residues long: Putative HTH-type transcriptional regulator BadM (156 aa).

Residues 4-130 (RLQKSTMCGL…RSVSITSLLK (127 aa)) enclose the HTH rrf2-type domain. Residues 136–156 (RRKTERGPNGASARHSSAGRA) form a disordered region. Over residues 145–156 (GASARHSSAGRA) the composition is skewed to low complexity.

The protein is Putative HTH-type transcriptional regulator BadM (badM) of Rhodopseudomonas palustris (strain ATCC BAA-98 / CGA009).